The sequence spans 375 residues: Aldehyde reductase FrzD (375 aa).

Alanine 61, glutamine 103, and histidine 171 together coordinate FMN. The Proton donor role is filled by tyrosine 176. FMN contacts are provided by lysine 223, glycine 294, and arginine 319.

The protein belongs to the NADH:flavin oxidoreductase/NADH oxidase family. It depends on FMN as a cofactor.

It carries out the reaction (1S,4S)-4-[(4-hydroxyphenyl)methyl]-2,5-diazaspiro[bicyclo[3.2.1]octane-6,1'-cyclohexane]-2',5'-dien-4'-one + 2 NADPH + 2 H(+) = (1S,4S)-4-[(4-hydroxyphenyl)methyl]-2,5-diazaspiro[bicyclo[3.2.1]octane-6,1'-cyclohexan]-4'-one + 2 NADP(+). Its pathway is alkaloid biosynthesis; ergot alkaloid biosynthesis. In terms of biological role, aldehyde reductase; part of the gene cluster that mediates the biosynthesis of the alkaloid (-)-FR901483, a potent immunosuppressant that shows efficacy in animal models and a probable inhibitor of purine nucleotide biosynthesis by targeting phosphoribosylpyrophosphate amidotransferase (PPAT). Within the pathway, FrzD reduces the dienone portion of the pathway intermediates to cyclohexanone. The biosynthesis of (-)-FR901483 starts with the condensation of two L-tyrosines to yield (S,S)-dityrosyl-piperazine. This process occurs in 3 steps with the non-canonical nonribosomal peptide synthetase FrzA catalyzing the reduction of L-tyrosine into L-tyrosinal, the spontaneous condensation of 2 L-tyrosinal units, and the subsequent reduction by the NmrA-like family domain-containing oxidoreductase FrzB. The cytochrome P450 monooxygenase FrzC then performs coupling between N10 and C1' to morph the piperazine into a 1,4-diazabicyclo[3.2.1]octane spiro-fused to a 2,5-cyclohexadienone. The dienone portion is further reduced to cyclohexanone by the flavin-dependent reductase FrzD. The methyltranserases (MTs) FrzE and FrzF are then involved in the methylation at the C10' amine and the C4 phenolic oxygen, respectively. The order of the two MTs appear to be interchangeable. Cleavage of the C9-N10' bond by the dioxygenase FrzG then leads to formation of a conjugated iminium. In addition to the oxidation of C9, an additional dehydrogenation between C7 and C8 can occur to give a likely shunt product. The next biosynthetic step is the intramolecular aldol condensation catalyzed by the newly identified aldolase FrzH to yield an aza-tricyclic product with the formation of a C9-C3' bond. The short-chain dehydrogenase/reductase FrzI then produces dephospho-(-)-FR901483 that is phosphorylated at C4'-OH into (-)-FR901483 by the phosphotransferase FrzJ. The only unassigned enzyme in the cluster is the second cytochrome P450 monooxygenase FrzL. In Cladobotryum sp, this protein is Aldehyde reductase FrzD.